The following is a 418-amino-acid chain: Serine--tRNA ligase (418 aa).

228 to 230 (TSE) contacts L-serine. ATP-binding positions include 258–260 (RKE) and V274. E281 lines the L-serine pocket. 345 to 348 (EVVS) serves as a coordination point for ATP. T381 contributes to the L-serine binding site.

Belongs to the class-II aminoacyl-tRNA synthetase family. Type-1 seryl-tRNA synthetase subfamily. As to quaternary structure, homodimer. The tRNA molecule binds across the dimer.

The protein resides in the cytoplasm. It carries out the reaction tRNA(Ser) + L-serine + ATP = L-seryl-tRNA(Ser) + AMP + diphosphate + H(+). The enzyme catalyses tRNA(Sec) + L-serine + ATP = L-seryl-tRNA(Sec) + AMP + diphosphate + H(+). The protein operates within aminoacyl-tRNA biosynthesis; selenocysteinyl-tRNA(Sec) biosynthesis; L-seryl-tRNA(Sec) from L-serine and tRNA(Sec): step 1/1. Catalyzes the attachment of serine to tRNA(Ser). Is also able to aminoacylate tRNA(Sec) with serine, to form the misacylated tRNA L-seryl-tRNA(Sec), which will be further converted into selenocysteinyl-tRNA(Sec). The sequence is that of Serine--tRNA ligase from Cenarchaeum symbiosum (strain A).